We begin with the raw amino-acid sequence, 36 residues long: Photosystem I reaction center subunit VIII (36 aa).

A helical transmembrane segment spans residues 8-28 (AILVPIVGLVFPALSMALFFI).

This sequence belongs to the PsaI family.

It localises to the plastid. The protein resides in the chloroplast thylakoid membrane. Functionally, may help in the organization of the PsaL subunit. The protein is Photosystem I reaction center subunit VIII of Phaeodactylum tricornutum (strain CCAP 1055/1).